The primary structure comprises 757 residues: Elongation factor G, mitochondrial (757 aa).

A mitochondrion-targeting transit peptide spans 1–41 (MLERAALLHRLRLPAHSLPFIYNGALFGGAKRSFSATSKRC). The tr-type G domain maps to 66–347 (KLLRNIGVSA…AIVDYLPEPS (282 aa)). GTP contacts are provided by residues 75–82 (AHIDSGKT), 146–150 (DTPGH), and 200–203 (NKMD).

Belongs to the TRAFAC class translation factor GTPase superfamily. Classic translation factor GTPase family. EF-G/EF-2 subfamily.

It is found in the mitochondrion. Its pathway is protein biosynthesis; polypeptide chain elongation. Its function is as follows. Mitochondrial GTPase that catalyzes the GTP-dependent ribosomal translocation step during translation elongation. During this step, the ribosome changes from the pre-translocational (PRE) to the post-translocational (POST) state as the newly formed A-site-bound peptidyl-tRNA and P-site-bound deacylated tRNA move to the P and E sites, respectively. Catalyzes the coordinated movement of the two tRNA molecules, the mRNA and conformational changes in the ribosome. The polypeptide is Elongation factor G, mitochondrial (Eremothecium gossypii (strain ATCC 10895 / CBS 109.51 / FGSC 9923 / NRRL Y-1056) (Yeast)).